The sequence spans 246 residues: 3-deoxy-manno-octulosonate cytidylyltransferase (246 aa).

It belongs to the KdsB family.

The protein resides in the cytoplasm. It carries out the reaction 3-deoxy-alpha-D-manno-oct-2-ulosonate + CTP = CMP-3-deoxy-beta-D-manno-octulosonate + diphosphate. Its pathway is nucleotide-sugar biosynthesis; CMP-3-deoxy-D-manno-octulosonate biosynthesis; CMP-3-deoxy-D-manno-octulosonate from 3-deoxy-D-manno-octulosonate and CTP: step 1/1. The protein operates within bacterial outer membrane biogenesis; lipopolysaccharide biosynthesis. Functionally, activates KDO (a required 8-carbon sugar) for incorporation into bacterial lipopolysaccharide in Gram-negative bacteria. This Rickettsia akari (strain Hartford) protein is 3-deoxy-manno-octulosonate cytidylyltransferase.